A 277-amino-acid polypeptide reads, in one-letter code: MNLTIPFAKGHATENDFIIIPDEDARLDLTPEMVVKLCDRRAGIGADGILRVVKAADVEGSTVDPSLWFMDYRNADGSLAEMCGNGVRLFAHWLYSRSLVDNTSFDIGTRAGVRHVDILQADQHSAQVRVDMGIPDVTGLSTCDINGQVFAGLGVDMGNPHLACVVPGLSASALADMELRAPTFDQEFFPHGVNVEIVTELEDDAVSMRVWERGVGETRSCGTGTVAAACAALADAGLGEGTVKVCVPGGEVEVQIFDDGSTLTGPSAIIALGEVQI.

Residues Asn15 and Asn74 each coordinate substrate. Cys83 (proton donor) is an active-site residue. Substrate-binding positions include 84–85 (GN), Asn159, Asn194, and 212–213 (ER). The active-site Proton acceptor is Cys221. Residue 222-223 (GT) participates in substrate binding.

Belongs to the diaminopimelate epimerase family. In terms of assembly, homodimer.

It is found in the cytoplasm. It carries out the reaction (2S,6S)-2,6-diaminopimelate = meso-2,6-diaminopimelate. Its pathway is amino-acid biosynthesis; L-lysine biosynthesis via DAP pathway; DL-2,6-diaminopimelate from LL-2,6-diaminopimelate: step 1/1. Functionally, catalyzes the stereoinversion of LL-2,6-diaminopimelate (L,L-DAP) to meso-diaminopimelate (meso-DAP), a precursor of L-lysine and an essential component of the bacterial peptidoglycan. This chain is Diaminopimelate epimerase, found in Corynebacterium glutamicum (strain R).